The chain runs to 211 residues: Pupal cuticle protein G1A (211 aa).

A run of 5 repeats spans residues 13–16, 21–24, 33–36, 111–114, and 179–182.

Its function is as follows. Component of the cuticle of the pupa of Tenebrio molitor. This is Pupal cuticle protein G1A from Tenebrio molitor (Yellow mealworm beetle).